The following is a 276-amino-acid chain: UPF0328 protein ECU03_0010 (276 aa).

2 disordered regions span residues Met-1–Ser-132 and Ser-156–His-176. A compositionally biased stretch (basic and acidic residues) spans His-106–Thr-126.

This sequence belongs to the UPF0328 family.

This Encephalitozoon cuniculi (strain GB-M1) (Microsporidian parasite) protein is UPF0328 protein ECU03_0010.